Here is a 109-residue protein sequence, read N- to C-terminus: Movement protein TGB2 (109 aa).

At 1 to 9 (MPLTPPPDF) the chain is on the cytoplasmic side. Residues 10–30 (TKVYLSAALGVSLALVVWLLI) form a helical membrane-spanning segment. The Lumenal portion of the chain corresponds to 31–72 (RSTLPVVGDRDHNLPHGGWYRDGTKSVFYNSPGRLNSIEARK). Residues 73 to 93 (APLLGQPWAIVVLLVLLIWAS) traverse the membrane as a helical segment. The Cytoplasmic portion of the chain corresponds to 94–109 (HKLGRPNCRACAGSHT).

It belongs to the Tymovirales TGBp2 protein family.

The protein resides in the host endoplasmic reticulum membrane. Plays a role in viral cell-to-cell propagation, by facilitating genome transport to neighboring plant cells through plasmosdesmata,. This chain is Movement protein TGB2, found in Solanum tuberosum (Potato).